Here is a 211-residue protein sequence, read N- to C-terminus: Protein-L-isoaspartate O-methyltransferase (211 aa).

Ser-62 is an active-site residue.

This sequence belongs to the methyltransferase superfamily. L-isoaspartyl/D-aspartyl protein methyltransferase family.

The protein resides in the cytoplasm. It carries out the reaction [protein]-L-isoaspartate + S-adenosyl-L-methionine = [protein]-L-isoaspartate alpha-methyl ester + S-adenosyl-L-homocysteine. Functionally, catalyzes the methyl esterification of L-isoaspartyl residues in peptides and proteins that result from spontaneous decomposition of normal L-aspartyl and L-asparaginyl residues. It plays a role in the repair and/or degradation of damaged proteins. This is Protein-L-isoaspartate O-methyltransferase from Shewanella pealeana (strain ATCC 700345 / ANG-SQ1).